The primary structure comprises 609 residues: (R)-linalool synthase TPS5, chloroplastic (609 aa).

The transit peptide at 1-42 directs the protein to the chloroplast; sequence MVSILSNIGMMVVTFKRPSLFTSLRRRSANNIIITKHSHPIS. (2E)-geranyl diphosphate is bound by residues R325, D362, D366, R503, and D506. Residues D362 and D366 each coordinate Mg(2+). The DDXXD motif motif lies at 362-366; it reads DDIYD. Mg(2+)-binding residues include D506, T510, and E514.

It belongs to the terpene synthase family. Tpsb subfamily. Requires Mg(2+) as cofactor. Mn(2+) is required as a cofactor. Highly expressed in young fruits and plant tops. Expressed in flower buds and trichomes of petioles and stems. Expressed at low levels in young leaves, stems, petioles, sepals and petals.

Its subcellular location is the plastid. It is found in the chloroplast. It catalyses the reaction (2E)-geranyl diphosphate + H2O = (R)-linalool + diphosphate. The enzyme catalyses (2E,6E)-farnesyl diphosphate + H2O = (6E)-nerolidol + diphosphate. It participates in secondary metabolite biosynthesis; terpenoid biosynthesis. Its function is as follows. Involved in monoterpene (C10) biosynthesis in glandular trichomes. Converts geranyl diphosphate to linalool in glandular trichomes in response to jasmonate (JA). Can convert farnesyl diphosphate to nerolidol in vitro. The polypeptide is (R)-linalool synthase TPS5, chloroplastic (Solanum lycopersicum (Tomato)).